Reading from the N-terminus, the 996-residue chain is P3N-PIPO polyprotein (996 aa).

In terms of domain architecture, Peptidase S30 spans 173–313 (VVRSASVNNL…VFFYDDVDHY (141 aa)). Catalysis depends on for P1 proteinase activity residues histidine 226, glutamate 235, and serine 267. The Involved in interaction with stylet and aphid transmission motif lies at 365–368 (KLSC). The short motif at 621–623 (PTK) is the Involved in virions binding and aphid transmission element. Residues 647–769 (MYIAKEGYCY…QSEMKHYRVG (123 aa)) enclose the Peptidase C6 domain. Residues cysteine 655 and histidine 728 each act as for helper component proteinase activity in the active site.

This sequence belongs to the potyviridae P3N-PIPO polyprotein family. Interacts (via PIPO domain) with host PCaP1 protein; this interaction may help to anchor the movement complex to the plasma membrane from which the complex could move to the plasmodesmata. In terms of processing, potyviral RNA is expressed as two polyproteins which undergo post-translational proteolytic processing. Genome polyprotein is processed by NIa-pro, P1 and HC-pro proteinases resulting in the production of at least ten individual proteins. P3N-PIPO is cleaved by P1 and HC-pro proteinases resulting in the production of three individual proteins. The P1 proteinase and the HC-pro cleave only their respective C-termini autocatalytically.

The protein localises to the host cell junction. It localises to the host plasmodesma. It catalyses the reaction Hydrolyzes a Gly-|-Gly bond at its own C-terminus, commonly in the sequence -Tyr-Xaa-Val-Gly-|-Gly, in the processing of the potyviral polyprotein.. Its function is as follows. Required for aphid transmission and also has proteolytic activity. Only cleaves a Gly-Gly dipeptide at its own C-terminus. Interacts with virions and aphid stylets. Acts as a suppressor of RNA-mediated gene silencing, also known as post-transcriptional gene silencing (PTGS), a mechanism of plant viral defense that limits the accumulation of viral RNAs. May have RNA-binding activity. In terms of biological role, allows efficient cell to cell propagation, by bypassing the host cell wall barrier. Transports viral genome to neighboring plant cells directly through plasmosdesmata, without any budding. This Zucchini yellow mosaic virus (strain Reunion Island) (ZYMV) protein is P3N-PIPO polyprotein.